The sequence spans 289 residues: Probable endonuclease 4 (289 aa).

The Zn(2+) site is built by histidine 74, histidine 115, glutamate 150, aspartate 184, histidine 187, histidine 218, aspartate 231, histidine 233, and glutamate 263.

It belongs to the AP endonuclease 2 family. Zn(2+) serves as cofactor.

The enzyme catalyses Endonucleolytic cleavage to 5'-phosphooligonucleotide end-products.. Endonuclease IV plays a role in DNA repair. It cleaves phosphodiester bonds at apurinic or apyrimidinic (AP) sites, generating a 3'-hydroxyl group and a 5'-terminal sugar phosphate. The sequence is that of Probable endonuclease 4 from Mycoplasma capricolum subsp. capricolum (strain California kid / ATCC 27343 / NCTC 10154).